The sequence spans 97 residues: UPF0235 protein HD_0778 (97 aa).

The protein belongs to the UPF0235 family.

In Haemophilus ducreyi (strain 35000HP / ATCC 700724), this protein is UPF0235 protein HD_0778.